The primary structure comprises 172 residues: Allergen Bos d 2 (172 aa).

The first 16 residues, 1–16 (MKAVFLTLLFGLVCTA), serve as a signal peptide directing secretion. Residue Q17 is modified to Pyrrolidone carboxylic acid. 2 disulfides stabilise this stretch: C60-C64 and C79-C170.

It belongs to the calycin superfamily. Lipocalin family. Found exclusively in skin. Produced in sweat glands and transported to the skin surface.

Its subcellular location is the secreted. Probable pheromone carrier. This chain is Allergen Bos d 2, found in Bos taurus (Bovine).